The primary structure comprises 513 residues: ATP synthase subunit alpha 1 (513 aa).

169–176 is a binding site for ATP; the sequence is GDRQCGKT.

Belongs to the ATPase alpha/beta chains family. As to quaternary structure, F-type ATPases have 2 components, CF(1) - the catalytic core - and CF(0) - the membrane proton channel. CF(1) has five subunits: alpha(3), beta(3), gamma(1), delta(1), epsilon(1). CF(0) has three main subunits: a(1), b(2) and c(9-12). The alpha and beta chains form an alternating ring which encloses part of the gamma chain. CF(1) is attached to CF(0) by a central stalk formed by the gamma and epsilon chains, while a peripheral stalk is formed by the delta and b chains.

It localises to the cell inner membrane. The enzyme catalyses ATP + H2O + 4 H(+)(in) = ADP + phosphate + 5 H(+)(out). In terms of biological role, produces ATP from ADP in the presence of a proton gradient across the membrane. The alpha chain is a regulatory subunit. This Burkholderia pseudomallei (strain 1710b) protein is ATP synthase subunit alpha 1.